The chain runs to 243 residues: Sec-independent protein translocase protein TatC (243 aa).

A run of 7 helical transmembrane segments spans residues Val-18–Asp-38, Ile-70–Phe-90, Met-106–Phe-126, Phe-132–Ser-152, Phe-153–Ile-173, Tyr-191–Ser-211, and Leu-213–Ile-233.

Belongs to the TatC family. As to quaternary structure, forms a complex with TatA.

It is found in the cell membrane. Functionally, part of the twin-arginine translocation (Tat) system that transports large folded proteins containing a characteristic twin-arginine motif in their signal peptide across membranes. In Carboxydothermus hydrogenoformans (strain ATCC BAA-161 / DSM 6008 / Z-2901), this protein is Sec-independent protein translocase protein TatC.